We begin with the raw amino-acid sequence, 805 residues long: Leucine--tRNA ligase (805 aa).

The short motif at 40–51 is the 'HIGH' region element; the sequence is PYPSGSGLHVGH. The short motif at 576-580 is the 'KMSKS' region element; the sequence is KMSKS. Position 579 (Lys-579) interacts with ATP.

Belongs to the class-I aminoacyl-tRNA synthetase family.

It localises to the cytoplasm. It catalyses the reaction tRNA(Leu) + L-leucine + ATP = L-leucyl-tRNA(Leu) + AMP + diphosphate. The chain is Leucine--tRNA ligase from Chlorobium chlorochromatii (strain CaD3).